We begin with the raw amino-acid sequence, 446 residues long: Plant intracellular Ras-group-related LRR protein 3 (446 aa).

Positions Glu65–Glu100 form a coiled coil. The segment at Gly101 to Asp121 is disordered. LRR repeat units lie at residues Gly138–Arg160, Ile161–Leu184, Asp185–Leu207, Leu208–Cys230, Ser232–Leu254, Val255–Met277, Ser279–Leu300, Ser301–Asp324, Leu325–Arg347, and Asp349–Lys371. Positions Gly372–Trp384 match the GVYW motif.

Belongs to the SHOC2 family. In terms of tissue distribution, widely expressed.

Its function is as follows. Leucine-rich repeat protein that likely mediates protein interactions, possibly in the context of signal transduction. This chain is Plant intracellular Ras-group-related LRR protein 3 (IRL3), found in Oryza sativa subsp. japonica (Rice).